Consider the following 220-residue polypeptide: GTP-binding protein YPT53 (220 aa).

GTP contacts are provided by residues 19 to 26, 67 to 71, and 125 to 128; these read GESAVGKS, DTAGQ, and NKMD. Residues Cys-218 and Cys-220 are each lipidated (S-geranylgeranyl cysteine). Cys-220 carries the post-translational modification Cysteine methyl ester.

Belongs to the small GTPase superfamily. Rab family.

The protein localises to the cell membrane. In terms of biological role, required for transport in the endocytic pathway and for correct sorting of the vacuolar hydrolases suggesting a possible intersection of the endocytic with the vacuolar sorting pathway. May be involved in recruiting the MON1-CCZ1 complex to membranes enriched in phosphatidylinositol 3-phosphate (PtdIns[3]P) or other charged lipids, leading to recruitment of YPT7. This chain is GTP-binding protein YPT53 (YPT53), found in Saccharomyces cerevisiae (strain ATCC 204508 / S288c) (Baker's yeast).